A 160-amino-acid polypeptide reads, in one-letter code: MRIIVIAVGRLKQGPERELAERYRERFESLGRKLGFRGLDIVELPESRHADATGRIAEEANAIAAHIPEHAAVVALSERGDNLDSATLARHLGRWRDDSVPCAVFLIGGADGLSAELSRVAKIRLAFGKATWPHQIVRILLLEQIYRAGTILAGHPYHRA.

2 residues coordinate S-adenosyl-L-methionine: Leu76 and Gly108.

It belongs to the RNA methyltransferase RlmH family. Homodimer.

It localises to the cytoplasm. It carries out the reaction pseudouridine(1915) in 23S rRNA + S-adenosyl-L-methionine = N(3)-methylpseudouridine(1915) in 23S rRNA + S-adenosyl-L-homocysteine + H(+). In terms of biological role, specifically methylates the pseudouridine at position 1915 (m3Psi1915) in 23S rRNA. The polypeptide is Ribosomal RNA large subunit methyltransferase H (Afipia carboxidovorans (strain ATCC 49405 / DSM 1227 / KCTC 32145 / OM5) (Oligotropha carboxidovorans)).